Consider the following 325-residue polypeptide: uncharacterized protein (325 aa).

Coiled coils occupy residues 38-69 and 201-229; these read VHVANNLNNFVQQHKQLQNQMPQFQNQFQNQS and ANTDRFNAELELKESDLEKINETLKLEFK.

This is an uncharacterized protein from Acanthamoeba polyphaga (Amoeba).